A 258-amino-acid polypeptide reads, in one-letter code: Uridylate cyclase (258 aa).

The region spanning 50–190 is the Guanylate cyclase domain; sequence AAIFIDLRGS…DVVNKASKMC (141 aa). An a ribonucleoside 5'-triphosphate-binding site is contributed by phenylalanine 53. Mn(2+)-binding residues include aspartate 55 and aspartate 102.

It belongs to the adenylyl cyclase class-4/guanylyl cyclase family. Pyrimidine cyclase subfamily. In terms of assembly, homodimer. The cofactor is Mn(2+).

The protein resides in the cytoplasm. It catalyses the reaction UTP = 3',5'-cyclic UMP + diphosphate. Pycsar (pyrimidine cyclase system for antiphage resistance) provides immunity against bacteriophage. The pyrimidine cyclase (PycC) synthesizes cyclic nucleotides in response to infection; these serve as specific second messenger signals. The signals activate the adjacent effector, leading to bacterial cell death and abortive phage infection. A clade C Pycsar system. Functionally, the pyrimidine cyclase gene of a two-gene Pycsar system, weakly generates cyclic UMP (cUMP) from UTP, has little to no activity on ATP, CTP or GTP. Expression of this and adjacent effector GmPycTM (AC P0DV43) probably confers resistance to bacteriophage. The genes are probably only expressed in response to bacteriophage infection. The polypeptide is Uridylate cyclase (Gulbenkiania mobilis).